Reading from the N-terminus, the 1201-residue chain is Transcription-repair-coupling factor (1201 aa).

The disordered stretch occupies residues 1 to 27 (MRLLITLGPSGSTHGHSLHTDAGRRRG). The 162-residue stretch at 670-831 (DMQKPEPMDR…MSGVRDMSII (162 aa)) folds into the Helicase ATP-binding domain. Residue 683–690 (GDVGYGKT) coordinates ATP. The short motif at 784 to 787 (DEEQ) is the DEEQ box element. A Helicase C-terminal domain is found at 852 to 1006 (VVKEAIEREV…GFSIASHDLE (155 aa)).

The protein in the N-terminal section; belongs to the UvrB family. This sequence in the C-terminal section; belongs to the helicase family. RecG subfamily.

The protein resides in the cytoplasm. Its function is as follows. Couples transcription and DNA repair by recognizing RNA polymerase (RNAP) stalled at DNA lesions. Mediates ATP-dependent release of RNAP and its truncated transcript from the DNA, and recruitment of nucleotide excision repair machinery to the damaged site. The protein is Transcription-repair-coupling factor of Myxococcus xanthus.